We begin with the raw amino-acid sequence, 114 residues long: Non-specific lipid-transfer protein 1 (114 aa).

The signal sequence occupies residues 1-23 (MEMVSKIACFVLLCMVVVAPHAE). 4 disulfide bridges follow: Cys27–Cys73, Cys37–Cys50, Cys51–Cys96, and Cys71–Cys110.

This sequence belongs to the plant LTP family.

Its function is as follows. Plant non-specific lipid-transfer proteins transfer phospholipids as well as galactolipids across membranes. May play a role in wax or cutin deposition in the cell walls of expanding epidermal cells and certain secretory tissues. This Solanum pennellii (Tomato) protein is Non-specific lipid-transfer protein 1 (LTP1).